Reading from the N-terminus, the 345-residue chain is Putative [LysW]-L-2-aminoadipate/[LysW]-L-glutamate phosphate reductase (345 aa).

Residue 11-14 (SGFT) participates in NADP(+) binding. Positions 34–56 (TSRSKENKTIGHSHPNLRHSDLR) are disordered. C146 is a catalytic residue. NADP(+) is bound at residue N309.

It belongs to the NAGSA dehydrogenase family. Type 1 subfamily. LysY sub-subfamily.

The protein localises to the cytoplasm. It carries out the reaction [amino-group carrier protein]-C-terminal-N-(1-carboxy-5-oxopentan-1-yl)-L-glutamine + phosphate + NADP(+) = [amino-group carrier protein]-C-terminal-N-(1-carboxy-5-phosphooxy-5-oxopentan-1-yl)-L-glutamine + NADPH + H(+). The catalysed reaction is [amino-group carrier protein]-C-terminal-gamma-(L-glutamyl-5-semialdehyde)-L-glutamate + phosphate + NADP(+) = [amino-group carrier protein]-C-terminal-gamma-(5-phospho-L-glutamyl)-L-glutamate + NADPH + H(+). The protein operates within amino-acid biosynthesis; L-lysine biosynthesis via AAA pathway; L-lysine from L-alpha-aminoadipate (Thermus route): step 3/5. It functions in the pathway amino-acid biosynthesis; L-arginine biosynthesis. Involved in both the arginine and lysine biosynthetic pathways. This is Putative [LysW]-L-2-aminoadipate/[LysW]-L-glutamate phosphate reductase from Haloarcula marismortui (strain ATCC 43049 / DSM 3752 / JCM 8966 / VKM B-1809) (Halobacterium marismortui).